The primary structure comprises 1342 residues: DNA-directed RNA polymerase subunit beta (1342 aa).

Belongs to the RNA polymerase beta chain family. As to quaternary structure, the RNAP catalytic core consists of 2 alpha, 1 beta, 1 beta' and 1 omega subunit. When a sigma factor is associated with the core the holoenzyme is formed, which can initiate transcription.

The enzyme catalyses RNA(n) + a ribonucleoside 5'-triphosphate = RNA(n+1) + diphosphate. In terms of biological role, DNA-dependent RNA polymerase catalyzes the transcription of DNA into RNA using the four ribonucleoside triphosphates as substrates. This chain is DNA-directed RNA polymerase subunit beta, found in Cronobacter sakazakii (strain ATCC BAA-894) (Enterobacter sakazakii).